Here is a 402-residue protein sequence, read N- to C-terminus: Serine/threonine transporter SstT (402 aa).

8 helical membrane passes run 17 to 37, 44 to 64, 78 to 98, 138 to 158, 179 to 199, 212 to 232, 295 to 315, and 336 to 356; these read IAIGVVIGAILGLLIPKITVI, FVGGLKAIAPLLVSALVANAL, IIVLYLFGTFAAALTAVISHY, ALSQANYIGVLVWSVVFGFAM, IVRWIINLAPFGILGLVFDTI, VLILVLVGTMTFVALVINPII, MAGAAVTINVLTLAAVTTLGI, and ASGIAGGSLLLVPVACSLFGI.

It belongs to the dicarboxylate/amino acid:cation symporter (DAACS) (TC 2.A.23) family.

Its subcellular location is the cell membrane. The catalysed reaction is L-serine(in) + Na(+)(in) = L-serine(out) + Na(+)(out). It carries out the reaction L-threonine(in) + Na(+)(in) = L-threonine(out) + Na(+)(out). Its function is as follows. Involved in the import of serine and threonine into the cell, with the concomitant import of sodium (symport system). This chain is Serine/threonine transporter SstT, found in Streptococcus thermophilus (strain ATCC BAA-250 / LMG 18311).